The chain runs to 272 residues: Type III pantothenate kinase (272 aa).

6 to 13 (DVRNTHTV) is a binding site for ATP. 109 to 112 (GADR) provides a ligand contact to substrate. Residue aspartate 111 is the Proton acceptor of the active site. Position 131 (aspartate 131) interacts with K(+). Serine 134 is an ATP binding site. Threonine 186 is a substrate binding site.

This sequence belongs to the type III pantothenate kinase family. As to quaternary structure, homodimer. NH4(+) serves as cofactor. It depends on K(+) as a cofactor.

Its subcellular location is the cytoplasm. It catalyses the reaction (R)-pantothenate + ATP = (R)-4'-phosphopantothenate + ADP + H(+). Its pathway is cofactor biosynthesis; coenzyme A biosynthesis; CoA from (R)-pantothenate: step 1/5. In terms of biological role, catalyzes the phosphorylation of pantothenate (Pan), the first step in CoA biosynthesis. The chain is Type III pantothenate kinase from Mycobacterium marinum (strain ATCC BAA-535 / M).